The primary structure comprises 114 residues: uncharacterized protein (114 aa).

Transmembrane regions (helical) follow at residues 9–29 (LAIF…SFWL) and 75–95 (LVHF…VAII).

The protein resides in the cell membrane. This is an uncharacterized protein from Mycoplasma pneumoniae (strain ATCC 29342 / M129 / Subtype 1) (Mycoplasmoides pneumoniae).